The following is a 473-amino-acid chain: Chromosomal replication initiator protein DnaA (473 aa).

Residues 1–90 (MSSSLWLQCL…KRVTAPKSET (90 aa)) are domain I, interacts with DnaA modulators. A domain II region spans residues 91–136 (IAPARTRTAADVAAESSAPAQLQARKPVHNIWRDEEPVAVDLNHRS). Residues 137-353 (NVNPKHKFNN…GALNRVIANA (217 aa)) are domain III, AAA+ region. ATP is bound by residues glycine 181, glycine 183, lysine 184, and threonine 185. The domain IV, binds dsDNA stretch occupies residues 354-473 (NFTGRPITID…YSNLIRTLSS (120 aa)).

It belongs to the DnaA family. As to quaternary structure, oligomerizes as a right-handed, spiral filament on DNA at oriC.

The protein resides in the cytoplasm. In terms of biological role, plays an essential role in the initiation and regulation of chromosomal replication. ATP-DnaA binds to the origin of replication (oriC) to initiate formation of the DNA replication initiation complex once per cell cycle. Binds the DnaA box (a 9 base pair repeat at the origin) and separates the double-stranded (ds)DNA. Forms a right-handed helical filament on oriC DNA; dsDNA binds to the exterior of the filament while single-stranded (ss)DNA is stabiized in the filament's interior. The ATP-DnaA-oriC complex binds and stabilizes one strand of the AT-rich DNA unwinding element (DUE), permitting loading of DNA polymerase. After initiation quickly degrades to an ADP-DnaA complex that is not apt for DNA replication. Binds acidic phospholipids. This is Chromosomal replication initiator protein DnaA from Vibrio atlanticus (strain LGP32) (Vibrio splendidus (strain Mel32)).